A 413-amino-acid polypeptide reads, in one-letter code: Serine hydroxymethyltransferase (413 aa).

(6S)-5,6,7,8-tetrahydrofolate contacts are provided by residues Leu-117 and 121–123 (GHL). Lys-226 is modified (N6-(pyridoxal phosphate)lysine). (6S)-5,6,7,8-tetrahydrofolate contacts are provided by residues Glu-239 and 349 to 351 (SPF).

It belongs to the SHMT family. As to quaternary structure, homodimer. The cofactor is pyridoxal 5'-phosphate.

Its subcellular location is the cytoplasm. The enzyme catalyses (6R)-5,10-methylene-5,6,7,8-tetrahydrofolate + glycine + H2O = (6S)-5,6,7,8-tetrahydrofolate + L-serine. The protein operates within one-carbon metabolism; tetrahydrofolate interconversion. Its pathway is amino-acid biosynthesis; glycine biosynthesis; glycine from L-serine: step 1/1. Functionally, catalyzes the reversible interconversion of serine and glycine with tetrahydrofolate (THF) serving as the one-carbon carrier. This reaction serves as the major source of one-carbon groups required for the biosynthesis of purines, thymidylate, methionine, and other important biomolecules. Also exhibits THF-independent aldolase activity toward beta-hydroxyamino acids, producing glycine and aldehydes, via a retro-aldol mechanism. The polypeptide is Serine hydroxymethyltransferase (Bacillus cereus (strain AH820)).